The sequence spans 540 residues: MKTPEAPPLAPDCLPSDQAPAPARLSRQASPMDKNTDPELMPTPRDGDDPPQVSSDPMVGLALSQELEEGVPASLPTPLESGFGSPSELSSRVEEKELSENVSLPAEETNRPELGPGEDVEGVSEELTPEDEGYTIWNYNFSQVPRFLSGSWSEFITQPENFLKGCKWAPDGSCILTNSADNILRIYNLPPELYNEGEQLEYAEMAPVLRMVEGDTIYDYCWYSLMSSAQPDTSYVASSSRENPIHIWDAFTGELRASFRSYNHLDELTAAHSLCFSPDGSQLFCGFNRTVRVFSTSRPGRDCEVRTTFAKRQGQSGIISCIAFSPTQPLYACGSYGRSLGLYTWEDGSPLALLGGHQGGITHLCFHPDGNCFFSGARKDAELLCWDLRQLGHPLWSLSREVTTNQRIYFDLDPTGQFLVSGSTSGAVSVWDTGGAGLESKPEPVLSFQPQKDCTNGVSLHPSLPLLATASGQRVFPEPTESGDEREEEVDLPLLSMRHVHLECQLQLWWCGGGPDTSISDAHQEEMGQGRTEGGGGEFT.

The segment covering 1–10 (MKTPEAPPLA) has biased composition (pro residues). Residues 1–126 (MKTPEAPPLA…GEDVEGVSEE (126 aa)) are disordered. 6 positions are modified to phosphoserine: Ser26, Ser30, Ser54, Ser64, Ser85, and Ser90. A compositionally biased stretch (acidic residues) spans 116–126 (PGEDVEGVSEE). WD repeat units follow at residues 158-197 (QPEN…YNEG), 213-258 (EGDT…LRAS), 263-304 (NHLD…RDCE), 314-355 (GQSG…ALLG), 356-396 (GHQG…HPLW), and 402-441 (VTTN…LESK). Phosphothreonine is present on Thr480. Ser482 is subject to Phosphoserine. The segment at 520–540 (SDAHQEEMGQGRTEGGGGEFT) is disordered. Residues 531–540 (RTEGGGGEFT) show a composition bias toward gly residues.

This sequence belongs to the TCAB1 family. As to quaternary structure, component of the telomerase holoenzyme complex composed of one molecule of TERT, one molecule of WRAP53/TCAB1, two molecules of H/ACA ribonucleoprotein complex subunits DKC1, NOP10, NHP2 and GAR1, and a telomerase RNA template component (TERC). The telomerase holoenzyme complex is associated with TEP1, SMG6/EST1A and POT1. Interacts with the chaperonin-containing T-complex (TRiC) complex; which mediates the folding of WRAP53/TCAB1. Interacts with COIL. Interacts with SMN1. Interacts with RNF8. Interacts with histone H2AX. Phosphorylated at Ser-64 by ATM in response to DNA damage, promoting its interaction with histone H2AX and localization to sites of DNA double-strand breaks.

The protein resides in the nucleus. Its subcellular location is the cajal body. The protein localises to the chromosome. It is found in the telomere. RNA chaperone that plays a key role in telomere maintenance and RNA localization to Cajal bodies. Specifically recognizes and binds the Cajal body box (CAB box) present in both small Cajal body RNAs (scaRNAs) and telomerase RNA template component (TERC). Essential component of the telomerase holoenzyme complex, a ribonucleoprotein complex essential for the replication of chromosome termini that elongates telomeres in most eukaryotes. In the telomerase holoenzyme complex, required to stimulate the catalytic activity of the complex. Acts by specifically binding the CAB box of the TERC RNA and controlling the folding of the CR4/CR5 region of the TERC RNA, a critical step for telomerase activity. In addition, also controls telomerase holoenzyme complex localization to Cajal body. During S phase, required for delivery of TERC to telomeres during S phase and for telomerase activity. In addition to its role in telomere maintenance, also required for Cajal body formation, probably by mediating localization of scaRNAs to Cajal bodies. Also plays a role in DNA repair: phosphorylated by ATM in response to DNA damage and relocalizes to sites of DNA double-strand breaks to promote the repair of DNA double-strand breaks. Acts by recruiting the ubiquitin ligase RNF8 to DNA breaks and promote both homologous recombination (HR) and non-homologous end joining (NHEJ). This chain is Telomerase Cajal body protein 1, found in Bos taurus (Bovine).